Here is a 356-residue protein sequence, read N- to C-terminus: Aromatic dipeptide epimerase (356 aa).

Substrate-binding positions include T136 and 161–163 (KVK). The Mg(2+) site is built by D191, E219, and D244. Substrate-binding positions include K268 and 320–322 (DLD).

This sequence belongs to the mandelate racemase/muconate lactonizing enzyme family. Mg(2+) is required as a cofactor.

In terms of biological role, has epimerase activity with a variety of hydrophobic dipeptides (in vitro). Enzyme activity is highest with L-Phe-L-Tyr, but is still relatively low, suggesting that L-Phe-L-Tyr is not the physiological substrate. In Herpetosiphon aurantiacus (strain ATCC 23779 / DSM 785 / 114-95), this protein is Aromatic dipeptide epimerase.